Reading from the N-terminus, the 311-residue chain is MQIKLKDVKFTFNLKSSWEFQALHGIDFEVNQGEYVGIIGQTGSGKTTLIEHLNALLMPTTGTVEWIYKDEVFDKATKTKKEVVVTDVIGLKKVRKFKKVKQIRKRIGVVFQFAEYQLFKATVLEDIIFGPVSYGMDPKEAEEKAKKYIKLVGLPEEYLKRSPFDLSGGQKRRVALAGILAMEPDVLVVDEPTAGLDPWGVKEILDILTHLHESGKTIINVTHDLDHVLERAKRVIVLKNGKIIKDGQPYETLNDIAFLEENNLQPPKLLNFVNKLRAKGVNVPKVTSEAELVSWINDYMETKNKKEVSNE.

The 263-residue stretch at 3–265 (IKLKDVKFTF…IAFLEENNLQ (263 aa)) folds into the ABC transporter domain. ATP is bound at residue 40–47 (GQTGSGKT).

It belongs to the ABC transporter superfamily. Energy-coupling factor EcfA family. As to quaternary structure, forms a stable energy-coupling factor (ECF) transporter complex composed of 2 membrane-embedded substrate-binding proteins (S component), 2 ATP-binding proteins (A component) and 2 transmembrane proteins (T component).

It is found in the cell membrane. Its function is as follows. ATP-binding (A) component of a common energy-coupling factor (ECF) ABC-transporter complex. Unlike classic ABC transporters this ECF transporter provides the energy necessary to transport a number of different substrates. The chain is Energy-coupling factor transporter ATP-binding protein EcfA2 from Mycoplasmopsis synoviae (strain 53) (Mycoplasma synoviae).